The primary structure comprises 249 residues: Triosephosphate isomerase (249 aa).

Substrate contacts are provided by Asn12 and Lys14. At Lys14 the chain carries N6-acetyllysine. Position 68 is a 3'-nitrotyrosine (Tyr68). A Phosphoserine modification is found at Ser80. His96 (electrophile) is an active-site residue. Ser106 is subject to Phosphoserine. Residue Lys142 forms a Glycyl lysine isopeptide (Lys-Gly) (interchain with G-Cter in SUMO1) linkage. Lys149 carries the N6-succinyllysine modification. N6-acetyllysine; alternate is present on Lys156. Residue Lys156 is modified to N6-succinyllysine; alternate. A Phosphoserine modification is found at Ser159. The Proton acceptor role is filled by Glu166. Residue Thr173 is modified to Phosphothreonine. At Lys194 the chain carries N6-acetyllysine; alternate. Position 194 is an N6-succinyllysine; alternate (Lys194). Lys194 carries the N6-methyllysine; alternate modification. Residue Ser198 is modified to Phosphoserine. Tyr209 bears the 3'-nitrotyrosine mark. Ser212 is modified (phosphoserine). Thr214 is subject to Phosphothreonine. Ser223 carries the phosphoserine modification. Lys238 carries the N6-acetyllysine modification.

It belongs to the triosephosphate isomerase family. Homodimer.

It is found in the cytoplasm. It catalyses the reaction dihydroxyacetone phosphate = methylglyoxal + phosphate. It carries out the reaction D-glyceraldehyde 3-phosphate = dihydroxyacetone phosphate. It functions in the pathway carbohydrate degradation; glycolysis; D-glyceraldehyde 3-phosphate from glycerone phosphate: step 1/1. Its pathway is carbohydrate biosynthesis; gluconeogenesis. Its function is as follows. Triosephosphate isomerase is an extremely efficient metabolic enzyme that catalyzes the interconversion between dihydroxyacetone phosphate (DHAP) and D-glyceraldehyde-3-phosphate (G3P) in glycolysis and gluconeogenesis. It is also responsible for the non-negligible production of methylglyoxal a reactive cytotoxic side-product that modifies and can alter proteins, DNA and lipids. The polypeptide is Triosephosphate isomerase (TPI1) (Canis lupus familiaris (Dog)).